Reading from the N-terminus, the 41-residue chain is M-factor (41 aa).

The interval 1–25 (MDSMANTVSSSVVNTGNKPSETLNK) is disordered. The propeptide occupies 1–29 (MDSMANTVSSSVVNTGNKPSETLNKTVKN). Cysteine methyl ester is present on Cys-38. Cys-38 is lipidated: S-farnesyl cysteine. The propeptide at 39–41 (VIA) is removed in mature form.

It localises to the secreted. Its function is as follows. M-factor is a mating pheromone produced by M-type mating cells. All three mfm genes contribute to the production of M-factor. In Schizosaccharomyces pombe (strain 972 / ATCC 24843) (Fission yeast), this protein is M-factor (mfm3).